The following is a 278-amino-acid chain: Biotin synthase (278 aa).

The region spanning 1–227 (MQIMLCAISN…QSVVMVAGGR (227 aa)) is the Radical SAM core domain. Residues Cys16, Cys20, and Cys23 each coordinate [4Fe-4S] cluster. The [2Fe-2S] cluster site is built by Cys60, Cys95, and Cys153.

The protein belongs to the radical SAM superfamily. Biotin synthase family. In terms of assembly, homodimer. [4Fe-4S] cluster serves as cofactor. [2Fe-2S] cluster is required as a cofactor.

It carries out the reaction (4R,5S)-dethiobiotin + (sulfur carrier)-SH + 2 reduced [2Fe-2S]-[ferredoxin] + 2 S-adenosyl-L-methionine = (sulfur carrier)-H + biotin + 2 5'-deoxyadenosine + 2 L-methionine + 2 oxidized [2Fe-2S]-[ferredoxin]. It participates in cofactor biosynthesis; biotin biosynthesis; biotin from 7,8-diaminononanoate: step 2/2. In terms of biological role, catalyzes the conversion of dethiobiotin (DTB) to biotin by the insertion of a sulfur atom into dethiobiotin via a radical-based mechanism. The polypeptide is Biotin synthase (Campylobacter jejuni subsp. jejuni serotype O:6 (strain 81116 / NCTC 11828)).